A 202-amino-acid polypeptide reads, in one-letter code: dITP/XTP pyrophosphatase (202 aa).

Residue 10-15 (TGNAGK) participates in substrate binding. Mg(2+) contacts are provided by D46 and D75. The active-site Proton acceptor is D75. Residues S76, 160-163 (FGYD), K183, and 188-189 (HR) contribute to the substrate site.

It belongs to the HAM1 NTPase family. As to quaternary structure, homodimer. Mg(2+) is required as a cofactor.

The catalysed reaction is XTP + H2O = XMP + diphosphate + H(+). The enzyme catalyses dITP + H2O = dIMP + diphosphate + H(+). It carries out the reaction ITP + H2O = IMP + diphosphate + H(+). In terms of biological role, pyrophosphatase that catalyzes the hydrolysis of nucleoside triphosphates to their monophosphate derivatives, with a high preference for the non-canonical purine nucleotides XTP (xanthosine triphosphate), dITP (deoxyinosine triphosphate) and ITP. Seems to function as a house-cleaning enzyme that removes non-canonical purine nucleotides from the nucleotide pool, thus preventing their incorporation into DNA/RNA and avoiding chromosomal lesions. This chain is dITP/XTP pyrophosphatase, found in Idiomarina loihiensis (strain ATCC BAA-735 / DSM 15497 / L2-TR).